Reading from the N-terminus, the 141-residue chain is Large ribosomal subunit protein bL17 (141 aa).

This sequence belongs to the bacterial ribosomal protein bL17 family. As to quaternary structure, part of the 50S ribosomal subunit. Contacts protein L32.

This Gluconacetobacter diazotrophicus (strain ATCC 49037 / DSM 5601 / CCUG 37298 / CIP 103539 / LMG 7603 / PAl5) protein is Large ribosomal subunit protein bL17.